The chain runs to 264 residues: MSYISMKQLLEAGVHFGHETKRWNPKFKRFIFAERNGIFIIDLQKTLKQIDRSFDYIKDLAERGGVILFVGTKKQAQEIVELEARRTGMPYVTSRWLGGMLTNFRTIRTRIDRLNELDDMFESGRVNDRPKAERIELAAERERLLRFVGGIRKMTRLPDAIFVVDPTKEVIAVQEANKLGIPVIALADTDSDPDVIDYIVPGNDDAIRSIQLITHRIGDLIVEARGGGEDVSGERVSPDNADIEAAEDGEEVDNAQLTSSQGRS.

Residues 243 to 253 are compositionally biased toward acidic residues; the sequence is IEAAEDGEEVD. The tract at residues 243–264 is disordered; it reads IEAAEDGEEVDNAQLTSSQGRS. The segment covering 255–264 has biased composition (polar residues); it reads AQLTSSQGRS.

This sequence belongs to the universal ribosomal protein uS2 family.

This chain is Small ribosomal subunit protein uS2, found in Deinococcus geothermalis (strain DSM 11300 / CIP 105573 / AG-3a).